We begin with the raw amino-acid sequence, 247 residues long: UPF0659 protein C216.03 (247 aa).

The protein belongs to the UPF0659 family.

The protein resides in the cytoplasm. It is found in the nucleus. This chain is UPF0659 protein C216.03, found in Schizosaccharomyces pombe (strain 972 / ATCC 24843) (Fission yeast).